A 540-amino-acid polypeptide reads, in one-letter code: Putative cysteine ligase BshC (540 aa).

A coiled-coil region spans residues 455 to 491 (GKENLKRLIRVVNSFEEKVKQRHRKNNQVAIQQLQKI).

This sequence belongs to the BshC family.

In terms of biological role, involved in bacillithiol (BSH) biosynthesis. May catalyze the last step of the pathway, the addition of cysteine to glucosamine malate (GlcN-Mal) to generate BSH. This chain is Putative cysteine ligase BshC, found in Desulforamulus reducens (strain ATCC BAA-1160 / DSM 100696 / MI-1) (Desulfotomaculum reducens).